A 296-amino-acid chain; its full sequence is Ribosomal RNA small subunit methyltransferase A (296 aa).

The S-adenosyl-L-methionine site is built by N32, L34, G59, E80, D105, and N130.

Belongs to the class I-like SAM-binding methyltransferase superfamily. rRNA adenine N(6)-methyltransferase family. RsmA subfamily.

The protein localises to the cytoplasm. The enzyme catalyses adenosine(1518)/adenosine(1519) in 16S rRNA + 4 S-adenosyl-L-methionine = N(6)-dimethyladenosine(1518)/N(6)-dimethyladenosine(1519) in 16S rRNA + 4 S-adenosyl-L-homocysteine + 4 H(+). In terms of biological role, specifically dimethylates two adjacent adenosines (A1518 and A1519) in the loop of a conserved hairpin near the 3'-end of 16S rRNA in the 30S particle. May play a critical role in biogenesis of 30S subunits. This is Ribosomal RNA small subunit methyltransferase A from Lactiplantibacillus plantarum (strain ATCC BAA-793 / NCIMB 8826 / WCFS1) (Lactobacillus plantarum).